The following is a 670-amino-acid chain: PML-RARA-regulated adapter molecule 1 (670 aa).

The interval 1–561 is disordered; it reads MAHHLPAAME…PQQLPPMDPK (561 aa). Basic and acidic residues predominate over residues 31 to 43; the sequence is DLPKKPPKPEFGK. 4 repeat units span residues 70–81, 82–93, 94–105, and 106–117. A 4 X 12 AA repeats of K-P-P-[PQ]-P-[EQ]-[VAF]-T-D-L-P-K region spans residues 70–165; sequence KPPPPEVTDL…SLPEPGAPAR (96 aa). Residues 114-129 show a composition bias toward basic and acidic residues; sequence DLPKKPSKLELSDLSK. S340 is subject to Phosphoserine. Positions 386–398 are enriched in low complexity; the sequence is SSASESSLPAAVA. Over residues 454 to 463 the composition is skewed to pro residues; it reads PAKPPLPPGP. The span at 504 to 514 shows a compositional bias: acidic residues; it reads EIYELYDDVEP. A compositionally biased stretch (basic and acidic residues) spans 515-528; sequence RDDSSPSPKGRDEA. The SH3 domain maps to 571–649; the sequence is KAEREFRKKF…PRTALLPLET (79 aa).

As to quaternary structure, interacts with SKAP2, LCP2 and DBNL. May interact with LYN. Interacts with NEK6. Post-translationally, may be phosphorylated on tyrosines. As to expression, expressed in peripheral blood leukocytes and bone marrow. Expressed in monocytes, and to a lesser extent in granulocytes and lymphocytes. Not expressed in non hematopoietic tissues except in lung.

Functionally, may be involved in myeloid differentiation. May be involved in integrin signaling in neutrophils. Binds to PtdIns(4)P. This Homo sapiens (Human) protein is PML-RARA-regulated adapter molecule 1 (PRAM1).